A 354-amino-acid polypeptide reads, in one-letter code: tRNA N6-adenosine threonylcarbamoyltransferase (354 aa).

The Fe cation site is built by H111 and H115. Residues 134–138 (LVSGG), D167, G180, and N279 each bind substrate. D319 is a Fe cation binding site.

The protein belongs to the KAE1 / TsaD family. Fe(2+) is required as a cofactor.

The protein localises to the cytoplasm. The catalysed reaction is L-threonylcarbamoyladenylate + adenosine(37) in tRNA = N(6)-L-threonylcarbamoyladenosine(37) in tRNA + AMP + H(+). Its function is as follows. Required for the formation of a threonylcarbamoyl group on adenosine at position 37 (t(6)A37) in tRNAs that read codons beginning with adenine. Is involved in the transfer of the threonylcarbamoyl moiety of threonylcarbamoyl-AMP (TC-AMP) to the N6 group of A37, together with TsaE and TsaB. TsaD likely plays a direct catalytic role in this reaction. This Neisseria meningitidis serogroup A / serotype 4A (strain DSM 15465 / Z2491) protein is tRNA N6-adenosine threonylcarbamoyltransferase.